The following is a 488-amino-acid chain: Histone deacetylase 2 (488 aa).

The histone deacetylase stretch occupies residues 9-322 (KKKVCYYYDG…WTYETAVALD (314 aa)). The 1D-myo-inositol 1,4,5,6-tetrakisphosphate site is built by Gly28 and Lys32. N6-acetyllysine; alternate is present on Lys75. A Glycyl lysine isopeptide (Lys-Gly) (interchain with G-Cter in SUMO2); alternate cross-link involves residue Lys75. His142 is a catalytic residue. Ca(2+) is bound by residues Asp175, Asp177, His179, Phe188, Thr191, Val194, Ser198, and Phe199. Asp177 and His179 together coordinate Zn(2+). Lys221 is modified (N6-acetyllysine). Ca(2+) is bound at residue Tyr223. Cys262 is modified (S-nitrosocysteine). Position 265 (Asp265) interacts with Zn(2+). Arg271 contributes to the 1D-myo-inositol 1,4,5,6-tetrakisphosphate binding site. Cys274 is modified (S-nitrosocysteine). Positions 389–488 (AVHEDSGDED…GAKSEQLSNP (100 aa)) are disordered. Ser394, Ser407, Ser422, and Ser424 each carry phosphoserine. A compositionally biased stretch (basic and acidic residues) spans 402–417 (PDKRISIRASDKRIAC). Residues 418-428 (DEEFSDSEDEG) are compositionally biased toward acidic residues. Over residues 429–481 (EGGRRNVADHKKGAKKARIEEDKKETEDKKTDVKEEDKSKDNSGEKTDPKGAK) the composition is skewed to basic and acidic residues. Glycyl lysine isopeptide (Lys-Gly) (interchain with G-Cter in SUMO2) cross-links involve residues Lys439, Lys452, Lys458, Lys462, Lys478, and Lys481.

It belongs to the histone deacetylase family. HD type 1 subfamily. In terms of assembly, part of the core histone deacetylase (HDAC) complex composed of HDAC1, HDAC2, RBBP4 and RBBP7, the core complex associates with SIN3, SAP18 and SAP30 to form the SIN3 HDAC complex. Component of the nucleosome remodeling and deacetylase (NuRD) repressor complex, composed of core proteins MTA1, MTA2, MTA3, RBBP4, RBBP7, HDAC1, HDAC2, MBD2, MBD3, and peripherally associated proteins CDK2AP1, CDK2AP2, GATAD2A, GATAD2B, CHD3, CHD4 and CHD5. The exact stoichiometry of the NuRD complex is unknown, and some subunits such as MBD2 and MBD3, GATAD2A and GATAD2B, and CHD3, CHD4 and CHD5 define mutually exclusive NuRD complexes. Component of a RCOR/GFI/KDM1A/HDAC complex. Component of a BHC histone deacetylase complex that contains HDAC1, HDAC2, HMG20B, KDM1A, RCOR1 and PHF21A. The BHC complex may also contain ZMYM2, ZNF217, ZMYM3, GSE1 and GTF2I. Part of a complex containing the core histones H2A, H2B, H3 and H4, DEK and unphosphorylated DAXX. Part of a complex containing ATR and CHD4. Forms a heterologous complex at least with YY1. Interacts in the late S-phase of DNA-replication with DNMT1 in the other transcriptional repressor complex composed of DNMT1, DMAP1, PCNA, CAF1. Component of a mSin3A corepressor complex that contains SIN3A, SAP130, SUDS3, ARID4B, HDAC1 and HDAC2. Part of a complex composed of TRIM28, HDAC1, HDAC2 and EHMT2. Part of a complex containing at least CDYL, MIER1, MIER2, HDAC1 and HDAC2. Component of a histone deacetylase complex containing DNTTIP1, ZNF541, HDAC1 and HDAC2. Forms a complex comprising APPL1, RUVBL2, APPL2, CTNNB1 and HDAC1. Interacts directly with GFI1. Interacts directly with GFI1B. Interacts with APEX1; the interaction is not dependent on the acetylated status of APEX1. Interacts with ATR. Interacts with BCL6 (non-acetylated form). Interacts with BEND3. Interacts with CBFA2T3. Interacts with CDK2AP1. Interacts with CHD4. Interacts with CHD5. Interacts with CHFR. Interacts with CRY1. Interacts with DNMT1. Interacts with GATAD2A. Interacts with HCFC1. Interacts with HDAC7. Interacts with HDAC10. Interacts with INSM1. Interacts with KDM4A. Interacts with MACROH2A1 (via the non-histone region). Interacts with MBD3L2. Interacts with MTA1, with a preference for sumoylated MTA1. Interacts with NACC2. Interacts with NRIP1. Interacts with PELP1. Interacts with PIMREG. Interacts with PRDM6. Interacts with PWWP2B Interacts with SAP30. Interacts with SAP30L. Interacts with SETDB1. Interacts with SIX3. Interacts with SMARCAD1. Interacts with SNW1. Interacts with SPHK2. Interacts with SPEN/MINT. Interacts (CK2 phosphorylated form) with SP3. Interacts with SUV39H1. Interacts with TSHZ3 (via its N-terminus). Interacts with ZMYND8. Interacts with ZNF431. Interacts with ZNF263; recruited to the SIX3 promoter along with other proteins involved in chromatin modification and transcriptional corepression where it contributes to transcriptional repression. Identified in a complex with HDAC1, KCTD19, DNTTIP1 and ZNF541. Component of the SIN3B complex, which includes SIN3B, HDAC2, PHF12 and MORF4L1; interacts directly with all subunits. Zn(2+) is required as a cofactor. It depends on Ca(2+) as a cofactor. In terms of processing, S-nitrosylated by GAPDH. In neurons, S-nitrosylation at Cys-262 and Cys-274 does not affect enzyme activity, but induces HDAC2 release from chromatin. This in turn increases acetylation of histones surrounding neurotrophin-dependent gene promoters and promotes their transcription. In embryonic cortical neurons, S-Nitrosylation regulates dendritic growth and branching.

It is found in the nucleus. It localises to the cytoplasm. The enzyme catalyses N(6)-acetyl-L-lysyl-[histone] + H2O = L-lysyl-[histone] + acetate. It catalyses the reaction N(6)-acetyl-L-lysyl-[protein] + H2O = L-lysyl-[protein] + acetate. It carries out the reaction N(6)-(2E)-butenoyl-L-lysyl-[protein] + H2O = (2E)-2-butenoate + L-lysyl-[protein]. The catalysed reaction is N(6)-(2-hydroxyisobutanoyl)-L-lysyl-[protein] + H2O = 2-hydroxy-2-methylpropanoate + L-lysyl-[protein]. The enzyme catalyses N(6)-[(S)-lactoyl]-L-lysyl-[protein] + H2O = (S)-lactate + L-lysyl-[protein]. Inositol tetraphosphate (1D-myo-inositol 1,4,5,6-tetrakisphosphate) may act as an intermolecular glue between HDAC2 and N-Cor repressor complex components. Its function is as follows. Histone deacetylase that catalyzes the deacetylation of lysine residues on the N-terminal part of the core histones (H2A, H2B, H3 and H4). Histone deacetylation gives a tag for epigenetic repression and plays an important role in transcriptional regulation, cell cycle progression and developmental events. Histone deacetylases act via the formation of large multiprotein complexes. Forms transcriptional repressor complexes by associating with MAD, SIN3, YY1 and N-COR. Component of a RCOR/GFI/KDM1A/HDAC complex that suppresses, via histone deacetylase (HDAC) recruitment, a number of genes implicated in multilineage blood cell development. Acts as a component of the histone deacetylase NuRD complex which participates in the remodeling of chromatin. Component of the SIN3B complex that represses transcription and counteracts the histone acetyltransferase activity of EP300 through the recognition H3K27ac marks by PHF12 and the activity of the histone deacetylase HDAC2. Also deacetylates non-histone targets: deacetylates TSHZ3, thereby regulating its transcriptional repressor activity. May be involved in the transcriptional repression of circadian target genes, such as PER1, mediated by CRY1 through histone deacetylation. Involved in MTA1-mediated transcriptional corepression of TFF1 and CDKN1A. In addition to protein deacetylase activity, also acts as a protein-lysine deacylase by recognizing other acyl groups: catalyzes removal of (2E)-butenoyl (crotonyl), lactoyl (lactyl) and 2-hydroxyisobutanoyl (2-hydroxyisobutyryl) acyl groups from lysine residues, leading to protein decrotonylation, delactylation and de-2-hydroxyisobutyrylation, respectively. The protein is Histone deacetylase 2 of Mus musculus (Mouse).